The following is a 310-amino-acid chain: Glutamyl-Q tRNA(Asp) synthetase (310 aa).

L-glutamate-binding positions include Arg8–Ser12 and Glu44. The short motif at Pro11–Ser21 is the 'HIGH' region element. Residues Cys100, Cys102, Tyr123, and Cys127 each coordinate Zn(2+). Residues Tyr183 and Arg201 each contribute to the L-glutamate site. The 'KMSKS' region signature appears at Lys239 to Gln243. An ATP-binding site is contributed by Lys242.

The protein belongs to the class-I aminoacyl-tRNA synthetase family. GluQ subfamily. Requires Zn(2+) as cofactor.

Its function is as follows. Catalyzes the tRNA-independent activation of glutamate in presence of ATP and the subsequent transfer of glutamate onto a tRNA(Asp). Glutamate is transferred on the 2-amino-5-(4,5-dihydroxy-2-cyclopenten-1-yl) moiety of the queuosine in the wobble position of the QUC anticodon. The polypeptide is Glutamyl-Q tRNA(Asp) synthetase (Cupriavidus metallidurans (strain ATCC 43123 / DSM 2839 / NBRC 102507 / CH34) (Ralstonia metallidurans)).